The primary structure comprises 1053 residues: MATQTDKQTIGRHLEQVPKASNLISWSRNGFIAYIPPIITTTTTTPTTTTTTNNNKSNLLLTYIKNSDGKKWQLASPEPINIKLENNFLPQLSLVSWGSLNTDLAVSDIYGNFYILLAGVGLLDPNHIPSTITTTSTIKTEGNTEKNKDTKQIGNGSGTNGHGDSPINTPSFELTSYNHMEMIYRDIINPDINVAVNPGASIVAFKWLNIEKPQIVNKAATRLAENPTTTSSNSSSSIYGYGINQYQPYGVCHPIPTKQACVALRKNGQFILFYQGEHKVEYHKICCNLTDNISIIEKASIGFNNDKQIIVTAWDSLSNDINVYSIDINWGFLVESAKRQKLDQHYHTPKEAQKPPRLTLKKLHQMKPIQCFKEEDGESQSQSVVPEMGKLKVEELSSIDIISSNPDPKSGLSILITYGSSIIYRYALEKSDSSNTTSGGETSKNPISQAFYNLGVEKKIDWKGDDSSVRLVFKDKLMRRGQIESIINGFLDLSSLIIYKDGTVDVVDTTSKQIVNNSKNNNSVTGDEMELDNNDYPPKLISNLFDQGFQFPKISHKNRLVLAISPTMSSIVYTEIYGETVNLQLKPLERIDNFGTNSHDLYYTSVAFAHRYAFALYTSTCSDDLLLLIQSEINRIKDAVDGDTITRNKLGKQLCDSVIIECHKAINFHLDTITKESLDKLLSNNASLQKLLSLQLILGEFQQSSHFPNNYVVPDIAWIVLNLRSASLGIMFTLSSIYRQVSKKKPSEDTLQDSITRGECIMSIIGNFKWLIDLLVYLNQELLQLIYVKNNFLNNGNTTTSKLTLSNSIVLPLILNKVSRLFLMYAISAMGRTHEILKKLHKDLTEANKLFAPMKESLNRYFSISNNSPITVNLFESYLRECDALLNKEVPQKILTANNSINGNVNGNSGTSTNKPYSALKFEQKLLIKGIDVNDDNDSSTKISNTIIEELSNMILDRYSISISRETKLSELMFYDTDWLNIGINKKEVPSYTIDALRKLIISDSSTSTSLAKGEKLRVCTRCRAVSLVGDVTGLWTMVFQRTCMCGNAWVNV.

Residues 139–170 (KTEGNTEKNKDTKQIGNGSGTNGHGDSPINTP) are disordered. Positions 142–151 (GNTEKNKDTK) are enriched in basic and acidic residues.

Belongs to the Mediator complex subunit 16 family. As to quaternary structure, component of the Mediator complex.

It is found in the nucleus. In terms of biological role, component of the Mediator complex, a coactivator involved in the regulated transcription of nearly all RNA polymerase II-dependent genes. Mediator functions as a bridge to convey information from gene-specific regulatory proteins to the basal RNA polymerase II transcription machinery. Mediator is recruited to promoters by direct interactions with regulatory proteins and serves as a scaffold for the assembly of a functional preinitiation complex with RNA polymerase II and the general transcription factors. In Candida albicans (strain SC5314 / ATCC MYA-2876) (Yeast), this protein is Mediator of RNA polymerase II transcription subunit 16 (SIN4).